The following is a 392-amino-acid chain: Phosphoglycerate kinase (392 aa).

Substrate-binding positions include 21–23, Arg-36, 59–62, Arg-114, and Arg-147; these read DMN and HLGR. ATP is bound by residues Lys-198, Glu-320, and 346 to 349; that span reads GGDT.

This sequence belongs to the phosphoglycerate kinase family. Monomer.

The protein resides in the cytoplasm. The catalysed reaction is (2R)-3-phosphoglycerate + ATP = (2R)-3-phospho-glyceroyl phosphate + ADP. It functions in the pathway carbohydrate degradation; glycolysis; pyruvate from D-glyceraldehyde 3-phosphate: step 2/5. This Neisseria meningitidis serogroup C (strain 053442) protein is Phosphoglycerate kinase.